Reading from the N-terminus, the 58-residue chain is Leucine zipper protein 6 (58 aa).

As to expression, widely expressed, highest levels found in brain, placenta, spleen, testis, and ovary. Up-regulated in some tumor cells.

The sequence is that of Leucine zipper protein 6 (LUZP6) from Homo sapiens (Human).